We begin with the raw amino-acid sequence, 312 residues long: Olfactory receptor 6X1 (312 aa).

Topologically, residues 1-23 are extracellular; that stretch reads MRNGTVITEFILLGFPVIQGLQT. Residue asparagine 3 is glycosylated (N-linked (GlcNAc...) asparagine). Residues 24 to 44 traverse the membrane as a helical segment; the sequence is PLFIAIFLTYILTLAGNGLII. The Cytoplasmic segment spans residues 45 to 52; it reads ATVWAEPR. The helical transmembrane segment at 53–73 threads the bilayer; the sequence is LQIPMYFFLCNLSFLEIWYTT. Over 74–97 the chain is Extracellular; that stretch reads TVIPKLLGTFVVARTVICMSCCLL. Cysteine 95 and cysteine 187 are oxidised to a cystine. Residues 98-118 traverse the membrane as a helical segment; the sequence is QAFFHFFVGTTEFLILTIMSF. Residues 119 to 137 are Cytoplasmic-facing; the sequence is DRYLTICNPLHHPTIMTSK. Residues 138–158 form a helical membrane-spanning segment; sequence LCLQLALSSWVVGFTIVFCQT. At 159-195 the chain is on the extracellular side; it reads MLLIQLPFCGNNVISHFYCDVGPSLKAACIDTSILEL. Residues 196-215 form a helical membrane-spanning segment; the sequence is LGVIATILVIPGSLLFNMIS. Residues 216-235 lie on the Cytoplasmic side of the membrane; it reads YIYILSAILRIPSATGHQKT. Residues 236 to 256 form a helical membrane-spanning segment; sequence FSTCASHLTVVSLLYGAVLFM. At 257 to 269 the chain is on the extracellular side; the sequence is YLRPTAHSSFKIN. A helical transmembrane segment spans residues 270 to 290; sequence KVVSVLNTILTPLLNPFIYTI. At 291 to 312 the chain is on the cytoplasmic side; sequence RNKEVKGALRKAMTCPKTGHAK.

The protein belongs to the G-protein coupled receptor 1 family.

It is found in the cell membrane. Odorant receptor. This chain is Olfactory receptor 6X1 (OR6X1), found in Homo sapiens (Human).